Reading from the N-terminus, the 146-residue chain is VEWTDFERATIKDIFSKLEYDVVGPATLARCLVVYPWTQRYFAKFGNLYTATAIAENAMVSKHGITILHGLDRAVKNMDDIKNTYAELSVLHSEKLHVDPDNFKLLADCLTIVVAARFGSAFTGEVQAAFEKFMAVVVSSLGRQYH.

A Globin domain is found at 2–146 (EWTDFERATI…VVSSLGRQYH (145 aa)). Residues His63 and His92 each contribute to the heme b site.

It belongs to the globin family. Heterotetramer of two alpha chains and two beta chains. As to expression, red blood cells.

Involved in oxygen transport from gills to the various peripheral tissues. The polypeptide is Hemoglobin subunit beta-0 (hbb0) (Pagothenia borchgrevinki (Bald rockcod)).